Here is a 279-residue protein sequence, read N- to C-terminus: Shikimate dehydrogenase (NADP(+)) (279 aa).

Shikimate-binding positions include 19-21 and threonine 66; that span reads SFS. The Proton acceptor role is filled by lysine 70. Glutamate 82 is a binding site for NADP(+). Shikimate contacts are provided by asparagine 91 and aspartate 106. NADP(+) contacts are provided by residues 130–134 and leucine 222; that span reads GSGGA. Tyrosine 224 lines the shikimate pocket. Position 245 (glycine 245) interacts with NADP(+).

Belongs to the shikimate dehydrogenase family. In terms of assembly, homodimer.

The catalysed reaction is shikimate + NADP(+) = 3-dehydroshikimate + NADPH + H(+). It participates in metabolic intermediate biosynthesis; chorismate biosynthesis; chorismate from D-erythrose 4-phosphate and phosphoenolpyruvate: step 4/7. Involved in the biosynthesis of the chorismate, which leads to the biosynthesis of aromatic amino acids. Catalyzes the reversible NADPH linked reduction of 3-dehydroshikimate (DHSA) to yield shikimate (SA). The chain is Shikimate dehydrogenase (NADP(+)) from Methanococcus maripaludis (strain C6 / ATCC BAA-1332).